A 272-amino-acid chain; its full sequence is 3-methyl-2-oxobutanoate hydroxymethyltransferase (272 aa).

Residues Asp-51 and Asp-90 each contribute to the Mg(2+) site. Residues Asp-51–Ser-52, Asp-90, and Lys-118 each bind 3-methyl-2-oxobutanoate. Residue Glu-120 participates in Mg(2+) binding. Glu-187 acts as the Proton acceptor in catalysis.

Belongs to the PanB family. In terms of assembly, homodecamer; pentamer of dimers. It depends on Mg(2+) as a cofactor.

It localises to the cytoplasm. It carries out the reaction 3-methyl-2-oxobutanoate + (6R)-5,10-methylene-5,6,7,8-tetrahydrofolate + H2O = 2-dehydropantoate + (6S)-5,6,7,8-tetrahydrofolate. It functions in the pathway cofactor biosynthesis; (R)-pantothenate biosynthesis; (R)-pantoate from 3-methyl-2-oxobutanoate: step 1/2. Its function is as follows. Catalyzes the reversible reaction in which hydroxymethyl group from 5,10-methylenetetrahydrofolate is transferred onto alpha-ketoisovalerate to form ketopantoate. This is 3-methyl-2-oxobutanoate hydroxymethyltransferase from Xylella fastidiosa (strain M23).